The following is a 513-amino-acid chain: Putative thymidine phosphorylase (513 aa).

This sequence belongs to the thymidine/pyrimidine-nucleoside phosphorylase family. Type 2 subfamily.

It catalyses the reaction thymidine + phosphate = 2-deoxy-alpha-D-ribose 1-phosphate + thymine. This Rhodopseudomonas palustris (strain BisB18) protein is Putative thymidine phosphorylase.